The following is a 351-amino-acid chain: Spermidine/putrescine import ATP-binding protein PotA (351 aa).

In terms of domain architecture, ABC transporter spans 6-236 (LELRNVTKEY…PENAWVANFI (231 aa)). 38–45 (GPSGCGKT) contributes to the ATP binding site.

It belongs to the ABC transporter superfamily. Spermidine/putrescine importer (TC 3.A.1.11.1) family. In terms of assembly, the complex is composed of two ATP-binding proteins (PotA), two transmembrane proteins (PotB and PotC) and a solute-binding protein (PotD).

It is found in the cell membrane. It catalyses the reaction ATP + H2O + polyamine-[polyamine-binding protein]Side 1 = ADP + phosphate + polyamineSide 2 + [polyamine-binding protein]Side 1.. Its function is as follows. Part of the ABC transporter complex PotABCD involved in spermidine/putrescine import. Responsible for energy coupling to the transport system. This chain is Spermidine/putrescine import ATP-binding protein PotA, found in Mycoplasma capricolum subsp. capricolum (strain California kid / ATCC 27343 / NCTC 10154).